Reading from the N-terminus, the 355-residue chain is Probable zinc transporter 12 (355 aa).

Positions 1-25 are cleaved as a signal peptide; that stretch reads MSRFRKTLVSAFVLCLVIFPLLVSA. The Extracellular portion of the chain corresponds to 26 to 50; that stretch reads AEEENQCGGSKGGSAAEKASALKYK. A helical transmembrane segment spans residues 51 to 71; that stretch reads IIAFFSILIAGVFGVCLPIFG. Topologically, residues 72–77 are cytoplasmic; that stretch reads LKTESN. The chain crosses the membrane as a helical span at residues 78–98; the sequence is FFMYVKAFAAGVILATGFVHI. Residues 99-116 are Extracellular-facing; that stretch reads LPDATESLTSSCLGEEPP. Residues 117-137 form a helical membrane-spanning segment; sequence WGDFPMTGLVAMAASILTMLI. Over 138 to 200 the chain is Cytoplasmic; it reads ESFASGYLNR…DDDHIDMRKK (63 aa). The tract at residues 156–183 is disordered; the sequence is TLPVSTGGEEEHAHTGSAHTHASQGHSH. Residues 201 to 221 traverse the membrane as a helical segment; that stretch reads IVTQILELGIVVHSVIIGISL. Residues 222-231 are Extracellular-facing; it reads GASPSVSTIK. A helical membrane pass occupies residues 232-252; it reads PLIAAITFHQLFEGFGLGGCI. Over 253-261 the chain is Cytoplasmic; sequence SEAKFRVKK. Residues 262 to 282 traverse the membrane as a helical segment; that stretch reads IWVMLMFFALTAPIGIGIGIG. Over 283-302 the chain is Extracellular; that stretch reads VAEIYNENSPMALKVSGFLN. A helical membrane pass occupies residues 303-323; the sequence is ATASGILIYMALVDLVAPLFM. Residues 324–334 are Cytoplasmic-facing; sequence NQKTQSSMKIQ. Residues 335 to 355 traverse the membrane as a helical segment; sequence VACSVSLVVGAGLMSLLAIWA.

The protein belongs to the ZIP transporter (TC 2.A.5) family.

The protein localises to the cell membrane. Zinc transporter involved in zinc uptake in roots. Targeted by BZIP23 transcription factor in response to zinc-deficient conditions. This chain is Probable zinc transporter 12 (ZIP12), found in Arabidopsis thaliana (Mouse-ear cress).